The sequence spans 643 residues: Galactan 5-O-arabinofuranosyltransferase (643 aa).

13 helical membrane passes run 25-45, 66-86, 97-117, 180-200, 205-225, 229-249, 255-272, 276-293, 309-329, 355-375, 384-404, 420-440, and 445-465; these read VLVA…VAVV, ALTT…GWLW, LGGL…PLGA, FKPW…VLWW, FEYA…YSSP, AAMI…GLGA, WAAV…ATWY, VAYG…LAGS, LAVV…PYLL, FPML…LWLV, AGAL…SMLA, LSVL…QALG, and GVIP…SQDI. Residues 466–643 are Extracellular-facing; sequence PDVLRPDLTI…LAIRKPQESA (178 aa).

This sequence belongs to the glycosyltransferase 85 family.

The protein resides in the cell membrane. It carries out the reaction Adds an alpha-D-arabinofuranosyl group from trans,octacis-decaprenylphospho-beta-D-arabinofuranose at the 5-O-position of the eighth, tenth and twelfth galactofuranose unit of the galactofuranan chain of [beta-D-galactofuranosyl-(1-&gt;5)-beta-D-galactofuranosyl-(1-&gt;6)]14-beta-D-galactofuranosyl-(1-&gt;5)-beta-D-galactofuranosyl-(1-&gt;4)-alpha-L-rhamnopyranosyl-(1-&gt;3)-N-acetyl-alpha-D-glucosaminyl-diphospho-trans,octacis-decaprenol.. Its pathway is cell wall biogenesis; cell wall polysaccharide biosynthesis. Involved in the biosynthesis of the arabinogalactan (AG) region of the mycolylarabinogalactan-peptidoglycan (mAGP) complex, an essential component of the mycobacterial cell wall. Catalyzes the addition of the first key arabinofuranosyl (Araf) residue from the sugar donor decaprenyl-phospho-arabinose (DPA) on the C-5 of a 6-linked galactofuranosyl (Galf) of the galactan domain, thus 'priming' the galactan for further elaboration by other arabinofuranosyltransferases. It is not able to add an Araf residue to a terminal Galf. The chain is Galactan 5-O-arabinofuranosyltransferase from Mycobacterium tuberculosis (strain CDC 1551 / Oshkosh).